The sequence spans 316 residues: Acetaldehyde dehydrogenase (316 aa).

An NAD(+)-binding site is contributed by 13–16; it reads SGNI. The active-site Acyl-thioester intermediate is the Cys-131. NAD(+) contacts are provided by residues 162 to 170 and Asn-290; that span reads SAGPGTRAN.

This sequence belongs to the acetaldehyde dehydrogenase family.

The catalysed reaction is acetaldehyde + NAD(+) + CoA = acetyl-CoA + NADH + H(+). Catalyzes the conversion of acetaldehyde to acetyl-CoA, using NAD(+) and coenzyme A. Is the final enzyme in the meta-cleavage pathway for the degradation of 2-aminophenol. The chain is Acetaldehyde dehydrogenase (amnH) from Pseudomonas sp.